The primary structure comprises 205 residues: Large ribosomal subunit protein uL18 (205 aa).

The protein belongs to the universal ribosomal protein uL18 family. As to quaternary structure, part of the 50S ribosomal subunit. Contacts the 5S and 23S rRNAs.

This is one of the proteins that bind and probably mediate the attachment of the 5S RNA into the large ribosomal subunit, where it forms part of the central protuberance. The polypeptide is Large ribosomal subunit protein uL18 (Pyrobaculum arsenaticum (strain DSM 13514 / JCM 11321 / PZ6)).